The primary structure comprises 1085 residues: Activating transcription factor 7-interacting protein 1 (1085 aa).

9 disordered regions span residues 1 to 22, 47 to 109, 127 to 245, 329 to 381, 469 to 499, 517 to 560, 650 to 843, 889 to 910, and 932 to 975; these read MDNT…RASD, GKHE…VNVT, LGSN…NTDS, PNKS…VHSK, AAKE…ANAN, RNVG…TSSP, ASTN…TTIH, NSVR…QTGS, and GAPQ…ANTS. Polar residues predominate over residues 54–64; the sequence is SDLNSPLSNTD. Basic and acidic residues-rich tracts occupy residues 82–91 and 133–150; these read SEIKRPESRA and NFHE…RESD. Composition is skewed to polar residues over residues 151–165 and 173–182; these read TPSG…NSFS and NDITIISNSP. 2 stretches are compositionally biased toward basic and acidic residues: residues 347–379 and 469–479; these read EREV…DSVH and AAKEDMKKKQE. The stretch at 446-480 forms a coiled coil; it reads NKRHKTVLTELQAKITRLTKRFGAAKEDMKKKQEN. 3 stretches are compositionally biased toward low complexity: residues 487 to 499, 529 to 547, and 651 to 666; these read SSGK…ANAN, APVS…TPAS, and STNT…VSSP. Polar residues predominate over residues 667-717; sequence GVQRNSPASAGSVRTTLAVQAVSTTHPVAQTTRTSLPTVGTSGLHNSTSSR. Positions 732–743 are enriched in low complexity; sequence TAPTEPPTITAP. Polar residues-rich tracts occupy residues 746–775, 792–810, and 830–843; these read ENQT…VTGS, SSQA…AQSI, and TGVP…TTIH. Residues 950 to 968 show a composition bias toward pro residues; that stretch reads PRPVHPAPLPEAPQPPRLP. The region spanning 976–1082 is the Fibronectin type-III domain; that stretch reads LPQKPQLKLA…DPQSTDVISS (107 aa).

This sequence belongs to the MCAF family.

The protein resides in the nucleus. Recruiter that couples transcriptional factors to general transcription apparatus and thereby modulates transcription regulation and chromatin formation. Can both act as an activator or a repressor depending on the context. Mediates MBD1-dependent transcriptional repression, probably by recruiting complexes containing histone methyltransferase activity. May belong to a complex that represses transcription and couples DNA methylation and histone H3 'Lys-9' trimethylation (H3K9me3). This chain is Activating transcription factor 7-interacting protein 1 (ATF7IP), found in Gallus gallus (Chicken).